We begin with the raw amino-acid sequence, 658 residues long: tRNA uridine 5-carboxymethylaminomethyl modification enzyme MnmG (658 aa).

Residue 13-18 coordinates FAD; the sequence is GAGHAG. NAD(+) is bound at residue 285–299; it reads GPRYCPSVEDKINRF.

It belongs to the MnmG family. Homodimer. Heterotetramer of two MnmE and two MnmG subunits. FAD is required as a cofactor.

It localises to the cytoplasm. NAD-binding protein involved in the addition of a carboxymethylaminomethyl (cmnm) group at the wobble position (U34) of certain tRNAs, forming tRNA-cmnm(5)s(2)U34. The chain is tRNA uridine 5-carboxymethylaminomethyl modification enzyme MnmG from Verminephrobacter eiseniae (strain EF01-2).